Here is a 180-residue protein sequence, read N- to C-terminus: Virion protein US10 homolog (180 aa).

This sequence belongs to the herpesviridae US10 family. In terms of processing, phosphorylated.

It localises to the virion tegument. The protein localises to the host nucleus matrix. This chain is Virion protein US10 homolog (64), found in Varicella-zoster virus (strain Dumas) (HHV-3).